We begin with the raw amino-acid sequence, 342 residues long: Dihydroorotate dehydrogenase (quinone) (342 aa).

FMN contacts are provided by residues 60–64 (AGFDK) and Thr-84. Lys-64 serves as a coordination point for substrate. 109-113 (NRMGF) contacts substrate. Residues Asn-137 and Asn-170 each contribute to the FMN site. Asn-170 serves as a coordination point for substrate. The active-site Nucleophile is Ser-173. Residue Asn-175 participates in substrate binding. FMN-binding residues include Lys-215 and Thr-243. 244–245 (NT) is a binding site for substrate. Residues Gly-266, Gly-295, and 316–317 (YT) each bind FMN.

This sequence belongs to the dihydroorotate dehydrogenase family. Type 2 subfamily. As to quaternary structure, monomer. FMN is required as a cofactor.

It is found in the cell membrane. It carries out the reaction (S)-dihydroorotate + a quinone = orotate + a quinol. It participates in pyrimidine metabolism; UMP biosynthesis via de novo pathway; orotate from (S)-dihydroorotate (quinone route): step 1/1. Its function is as follows. Catalyzes the conversion of dihydroorotate to orotate with quinone as electron acceptor. The sequence is that of Dihydroorotate dehydrogenase (quinone) from Halorhodospira halophila (strain DSM 244 / SL1) (Ectothiorhodospira halophila (strain DSM 244 / SL1)).